Consider the following 481-residue polypeptide: MSTTPQMSQSGFQDDQLEAGAREDVGTEAQEKPLSTTGTMVDEPQPNPNVVDWDGPDDPQHPLNWSKAQKNLHVGIVSLSTLAANLAATMFAPGAAELSDEFNITSATVTAMTVSLYVLGFALGPLLLAPLSELYGRLIIYHFCNMVYMAFTIGCAFSTNVAMFLVFRIIAGCAASGPMSIGGGTVADLFVQEQRGKAMALFAVGPLLGPVIGPIIGGFVSENVGWRWTFRILLILSGILATVTFALMKETNYTVILQKKALRMRKETGNEKLVAKSSRDETAGQMLARAIVRPLKLLIFSPIVLLVSLYTGILFGLIFLLFTTFPSVFQDVDKLLGSKKGEENAAPRPEDRLLLMKWLGPITPLGLFIYGWTAENRVHWIVPIIGTFIVGFGSLFVVIPGQIYLVDAFGAEAAASAMAANLLVRSPFGAFLDLTAEPLYSKLGLGWGNSVLGFITLAFTPVPWIFYTYGERLRTHFQVDL.

Residues Met-1–Gln-13 are compositionally biased toward polar residues. The disordered stretch occupies residues Met-1–Leu-63. Positions Gly-20–Glu-31 are enriched in basic and acidic residues. Asn-64 carries an N-linked (GlcNAc...) asparagine glycan. A helical transmembrane segment spans residues Leu-72–Ala-92. A glycan (N-linked (GlcNAc...) asparagine) is linked at Asn-103. Helical transmembrane passes span Ala-111–Leu-131, Val-147–Phe-167, Ile-169–Leu-189, Ala-200–Val-220, and Trp-228–Met-248. An N-linked (GlcNAc...) asparagine glycan is attached at Asn-252. Transmembrane regions (helical) follow at residues Pro-302 to Phe-322, Leu-353 to Thr-373, Trp-380 to Pro-400, Ile-403 to Leu-423, and Gly-446 to Phe-466.

Belongs to the major facilitator superfamily.

It localises to the cell membrane. Functionally, efflux pump required for efficient secretion of trichosetin or other secondary metabolies produced by the trichosetin gene cluster. Plays a crucial role in detoxification of the toxic trichosetin in Gibberella fujikuroi cells. The polypeptide is Trichosetin biosynthesis cluster MFS transporter (Gibberella fujikuroi (strain CBS 195.34 / IMI 58289 / NRRL A-6831) (Bakanae and foot rot disease fungus)).